A 140-amino-acid chain; its full sequence is Nucleoside diphosphate kinase (140 aa).

Residues K11, F59, R87, T93, R104, and N114 each contribute to the ATP site. The Pros-phosphohistidine intermediate role is filled by H117.

It belongs to the NDK family. As to quaternary structure, homotetramer. Requires Mg(2+) as cofactor.

It is found in the cytoplasm. The enzyme catalyses a 2'-deoxyribonucleoside 5'-diphosphate + ATP = a 2'-deoxyribonucleoside 5'-triphosphate + ADP. It carries out the reaction a ribonucleoside 5'-diphosphate + ATP = a ribonucleoside 5'-triphosphate + ADP. Functionally, major role in the synthesis of nucleoside triphosphates other than ATP. The ATP gamma phosphate is transferred to the NDP beta phosphate via a ping-pong mechanism, using a phosphorylated active-site intermediate. The polypeptide is Nucleoside diphosphate kinase (Rickettsia akari (strain Hartford)).